A 738-amino-acid polypeptide reads, in one-letter code: MVHVEMSPEAIATQKPYLDLGLTEAEYDRFAELIGHQPNDTEIGLASGMWSEHCAYKYSKPVLRQFWTKNERVLMGPGEGAGVIDIGEGKAVVFKAESHNHPSAVEPYEGAATGVGGIIRDIFSIGAKPVAMLDSLAFGDIEQPHTQHLVDRIVAGIGGYGNAIGIPTVGGETNFDGSYTRNPLVNAMCVGIMDKDQIQKGKAAGVGNALIYVGAKTGRDGINGASFASGDFSDEEAADRSAVQVGDPFMEKLLMDACLEITGHHQEALVGIQDMGAAGLVSSSVEMAGKANSGMVLDLDLIPQRETEMTPFEIMLSESQERMLLCVRAGFEQEVLAVFADYDLDAAIVGHVIAGHQYQLYHHGKLVCDVPVSSLTDDAPIYHQQGKMPKRLAQPAADFDPIITDPVQIWTDMMAMPTIADKSSLYKRYDAQVQTNTVVLPGSDAAVTRIRGTHRALAMTTDSKGRYLYLDPQVGAAMSVAEAARNLVASGAEPLGITDCLNFGDPTKPEAFYELAEAAKGIIAATKAFNAPVISGNVSLYNETNGEAIYPTPMIGMVGLIEDLSTITTAAFKQADDLIYLVGETHGDFNGSELQKLQTGEVTGKLFDFDLEAEKQHQHFVLKAIREHLITAAHDLSDGGLLVALAEMGFDAQLGAQINVTLPTAWGFSETQGRFLLTVAPENQAAFEALHGPAQLIGRVQAAPEFEVTTVNQHFSASLQQLQTAFEEALPCHMNQKA.

The active site involves H53. Residues Y56 and K95 each contribute to the ATP site. E97 contacts Mg(2+). Substrate contacts are provided by residues 98–101 (SHNH) and R120. H99 (proton acceptor) is an active-site residue. A Mg(2+)-binding site is contributed by D121. A substrate-binding site is contributed by Q244. D274 is a Mg(2+) binding site. A substrate-binding site is contributed by 318–320 (ESQ). D499 and G536 together coordinate ATP. A Mg(2+)-binding site is contributed by N537. S539 provides a ligand contact to substrate.

Belongs to the FGAMS family. As to quaternary structure, monomer. Part of the FGAM synthase complex composed of 1 PurL, 1 PurQ and 2 PurS subunits.

The protein localises to the cytoplasm. It carries out the reaction N(2)-formyl-N(1)-(5-phospho-beta-D-ribosyl)glycinamide + L-glutamine + ATP + H2O = 2-formamido-N(1)-(5-O-phospho-beta-D-ribosyl)acetamidine + L-glutamate + ADP + phosphate + H(+). The protein operates within purine metabolism; IMP biosynthesis via de novo pathway; 5-amino-1-(5-phospho-D-ribosyl)imidazole from N(2)-formyl-N(1)-(5-phospho-D-ribosyl)glycinamide: step 1/2. In terms of biological role, part of the phosphoribosylformylglycinamidine synthase complex involved in the purines biosynthetic pathway. Catalyzes the ATP-dependent conversion of formylglycinamide ribonucleotide (FGAR) and glutamine to yield formylglycinamidine ribonucleotide (FGAM) and glutamate. The FGAM synthase complex is composed of three subunits. PurQ produces an ammonia molecule by converting glutamine to glutamate. PurL transfers the ammonia molecule to FGAR to form FGAM in an ATP-dependent manner. PurS interacts with PurQ and PurL and is thought to assist in the transfer of the ammonia molecule from PurQ to PurL. The protein is Phosphoribosylformylglycinamidine synthase subunit PurL of Lacticaseibacillus paracasei (strain ATCC 334 / BCRC 17002 / CCUG 31169 / CIP 107868 / KCTC 3260 / NRRL B-441) (Lactobacillus paracasei).